A 182-amino-acid polypeptide reads, in one-letter code: UPF0301 protein MCA0413 1 (182 aa).

This sequence belongs to the UPF0301 (AlgH) family.

This Methylococcus capsulatus (strain ATCC 33009 / NCIMB 11132 / Bath) protein is UPF0301 protein MCA0413 1.